Reading from the N-terminus, the 132-residue chain is Small ribosomal subunit protein uS8 (132 aa).

The protein belongs to the universal ribosomal protein uS8 family. Part of the 30S ribosomal subunit. Contacts proteins S5 and S12.

One of the primary rRNA binding proteins, it binds directly to 16S rRNA central domain where it helps coordinate assembly of the platform of the 30S subunit. The sequence is that of Small ribosomal subunit protein uS8 from Kocuria rhizophila (strain ATCC 9341 / DSM 348 / NBRC 103217 / DC2201).